A 427-amino-acid polypeptide reads, in one-letter code: Probable fatty acid methyltransferase Rv3720 (427 aa).

S-adenosyl-L-methionine is bound by residues 167–168 (YT), 202–210 (LLDVGCGWG), and 227–232 (TLSAEQ).

This sequence belongs to the CFA/CMAS family.

Functionally, may be a S-adenosylmethionine-dependent methyltransferase involved in fatty acid metabolism. This Mycobacterium tuberculosis (strain ATCC 25618 / H37Rv) protein is Probable fatty acid methyltransferase Rv3720.